Reading from the N-terminus, the 119-residue chain is Large ribosomal subunit protein uL18 (119 aa).

It belongs to the universal ribosomal protein uL18 family. As to quaternary structure, part of the 50S ribosomal subunit; part of the 5S rRNA/L5/L18/L25 subcomplex. Contacts the 5S and 23S rRNAs.

Functionally, this is one of the proteins that bind and probably mediate the attachment of the 5S RNA into the large ribosomal subunit, where it forms part of the central protuberance. This is Large ribosomal subunit protein uL18 from Clostridium botulinum (strain Okra / Type B1).